The sequence spans 287 residues: Protoheme IX farnesyltransferase (287 aa).

A run of 7 helical transmembrane segments spans residues 19–39 (LMVA…VTIT), 100–120 (MVLC…IVAV), 134–154 (FALL…WLAV), 162–182 (MLVV…WLHA), 212–232 (VWFH…LLEG), 233–253 (VGMR…AMLA), and 267–287 (VLCA…VSLF).

The protein belongs to the UbiA prenyltransferase family. Protoheme IX farnesyltransferase subfamily.

The protein resides in the cell inner membrane. The catalysed reaction is heme b + (2E,6E)-farnesyl diphosphate + H2O = Fe(II)-heme o + diphosphate. It participates in porphyrin-containing compound metabolism; heme O biosynthesis; heme O from protoheme: step 1/1. Its function is as follows. Converts heme B (protoheme IX) to heme O by substitution of the vinyl group on carbon 2 of heme B porphyrin ring with a hydroxyethyl farnesyl side group. The polypeptide is Protoheme IX farnesyltransferase (Nitratidesulfovibrio vulgaris (strain DP4) (Desulfovibrio vulgaris)).